The following is a 182-amino-acid chain: Large ribosomal subunit protein uL6 (182 aa).

Belongs to the universal ribosomal protein uL6 family. Part of the 50S ribosomal subunit.

Its function is as follows. This protein binds to the 23S rRNA, and is important in its secondary structure. It is located near the subunit interface in the base of the L7/L12 stalk, and near the tRNA binding site of the peptidyltransferase center. The protein is Large ribosomal subunit protein uL6 of Dehalococcoides mccartyi (strain ATCC BAA-2100 / JCM 16839 / KCTC 5957 / BAV1).